An 872-amino-acid polypeptide reads, in one-letter code: Cyanophycin synthetase (872 aa).

The ATP-grasp domain maps to 224–480 (KTILQDAGVP…VAAPVMDMLF (257 aa)). 495 to 501 (GTNGKTT) serves as a coordination point for ATP.

In the C-terminal section; belongs to the MurCDEF family. In terms of assembly, homodimer.

The catalysed reaction is [L-4-(L-arginin-2-N-yl)aspartate](n) + L-aspartate + ATP = [L-4-(L-arginin-2-N-yl)aspartate](n)-L-aspartate + ADP + phosphate + H(+). It catalyses the reaction [L-4-(L-arginin-2-N-yl)aspartate](n)-L-aspartate + L-arginine + ATP = [L-4-(L-arginin-2-N-yl)aspartate](n+1) + ADP + phosphate + H(+). In terms of biological role, catalyzes the ATP-dependent polymerization of arginine and aspartate to multi-L-arginyl-poly-L-aspartic acid (cyanophycin; a water-insoluble reserve polymer). This is Cyanophycin synthetase (cphA) from Crocosphaera subtropica (strain ATCC 51142 / BH68) (Cyanothece sp. (strain ATCC 51142)).